We begin with the raw amino-acid sequence, 160 residues long: Cytochrome c-type biogenesis protein CcmE (160 aa).

Over Met-1–Arg-8 the chain is Cytoplasmic. A helical; Signal-anchor for type II membrane protein transmembrane segment spans residues Leu-9–Ala-29. Over Leu-30–Leu-160 the chain is Periplasmic. Heme is bound by residues His-130 and Tyr-134.

The protein belongs to the CcmE/CycJ family.

It localises to the cell inner membrane. Heme chaperone required for the biogenesis of c-type cytochromes. Transiently binds heme delivered by CcmC and transfers the heme to apo-cytochromes in a process facilitated by CcmF and CcmH. The sequence is that of Cytochrome c-type biogenesis protein CcmE from Pectobacterium carotovorum subsp. carotovorum (strain PC1).